Reading from the N-terminus, the 1771-residue chain is Myosin-H heavy chain (1771 aa).

Residues 7-57 (CGKEKVWVPNPEKGWINGDLIKEIPGEGWLVRDENGKEIKIEKDELRMQNP) enclose the Myosin N-terminal SH3-like domain. The 780-residue stretch at 61–840 (EGIDDMTSLS…IIANLELLRS (780 aa)) folds into the Myosin motor domain. 154–161 (GESGAGKT) is a binding site for ATP. The segment at 690 to 712 (LNSLMTTINSTNPHYIRCIKPNT) is actin-binding. IQ domains lie at 843 to 872 (MINS…SSIY), 866 to 895 (TKHS…ENSA), and 940 to 969 (RIKK…EAKS). 3 disordered regions span residues 1070-1176 (EKQH…NNVD), 1218-1282 (VKKS…PINM), and 1312-1343 (LNNG…KHIQ). Residues 1077–1111 (YKNNEVVGNTSFEGSTTTNNGVTSPPKSSPASPIR) are compositionally biased toward polar residues. The span at 1112–1139 (NSINSNSDTTISGSSDDSIDNTDSLILS) shows a compositional bias: low complexity. Basic and acidic residues predominate over residues 1143-1153 (HKGEDRKRNHE). Residues 1180–1224 (RRQFNELEKEYKELKQMDETHKQYIESLKLQITQLEEKVKKSSSH) adopt a coiled-coil conformation. Positions 1253–1281 (NSSSHHQQQQQQHNISPSNSITSTTSPIN) are enriched in low complexity. In terms of domain architecture, Dilute spans 1427–1695 (TGVLDPIETN…LTSLMDSPKY (269 aa)).

It belongs to the TRAFAC class myosin-kinesin ATPase superfamily. Myosin family. In terms of assembly, myosin I heavy chain is single-headed. Dimer of a heavy and a light chain. Inability to self-assemble into filaments.

Functionally, myosin is a protein that binds to actin and has ATPase activity that is activated by actin. The chain is Myosin-H heavy chain (myoH) from Dictyostelium discoideum (Social amoeba).